The sequence spans 295 residues: ATP synthase gamma chain (295 aa).

This sequence belongs to the ATPase gamma chain family. As to quaternary structure, F-type ATPases have 2 components, CF(1) - the catalytic core - and CF(0) - the membrane proton channel. CF(1) has five subunits: alpha(3), beta(3), gamma(1), delta(1), epsilon(1). CF(0) has three main subunits: a, b and c.

It localises to the cell inner membrane. In terms of biological role, produces ATP from ADP in the presence of a proton gradient across the membrane. The gamma chain is believed to be important in regulating ATPase activity and the flow of protons through the CF(0) complex. The sequence is that of ATP synthase gamma chain from Maricaulis maris (strain MCS10) (Caulobacter maris).